The primary structure comprises 120 residues: Large ribosomal subunit protein uL18 (120 aa).

This sequence belongs to the universal ribosomal protein uL18 family. In terms of assembly, part of the 50S ribosomal subunit; part of the 5S rRNA/L5/L18/L25 subcomplex. Contacts the 5S and 23S rRNAs.

Its function is as follows. This is one of the proteins that bind and probably mediate the attachment of the 5S RNA into the large ribosomal subunit, where it forms part of the central protuberance. This Methylorubrum populi (strain ATCC BAA-705 / NCIMB 13946 / BJ001) (Methylobacterium populi) protein is Large ribosomal subunit protein uL18.